Here is a 92-residue protein sequence, read N- to C-terminus: MSRSVWKGPFVDGYLLKKADKSRESGRKEVIKTWSRRSTILPQFVGLTFGVYNGQKHIPVSVSEEMVGHKLGEFAPTRTYYGHGADKKAKRK.

Belongs to the universal ribosomal protein uS19 family.

Functionally, protein S19 forms a complex with S13 that binds strongly to the 16S ribosomal RNA. The chain is Small ribosomal subunit protein uS19 from Chelativorans sp. (strain BNC1).